We begin with the raw amino-acid sequence, 497 residues long: Taxane 10-beta-hydroxylase (497 aa).

Cys443 contacts heme.

The protein belongs to the cytochrome P450 family. The cofactor is heme.

The catalysed reaction is taxa-4(20),11-dien-5alpha-yl acetate + reduced [NADPH--hemoprotein reductase] + O2 = 10beta-hydroxytaxa-4(20),11-dien-5alpha-yl acetate + oxidized [NADPH--hemoprotein reductase] + H2O + H(+). Its pathway is alkaloid biosynthesis; taxol biosynthesis; 10-deacetyl-2-debenzoylbaccatin III from taxa-4(20),11-dien-5alpha-ol: step 2/3. Its function is as follows. Involved in the transformation of a taxadienyl acetate by hydroxylation at C10 to yield taxadien-5-alpha-acetoxy-10-beta-ol. The sequence is that of Taxane 10-beta-hydroxylase (CYP725A1) from Taxus cuspidata (Japanese yew).